The primary structure comprises 283 residues: Bifunctional protein FolD (283 aa).

NADP(+)-binding positions include 165–167 (GRS), S190, and V231.

The protein belongs to the tetrahydrofolate dehydrogenase/cyclohydrolase family. In terms of assembly, homodimer.

The enzyme catalyses (6R)-5,10-methylene-5,6,7,8-tetrahydrofolate + NADP(+) = (6R)-5,10-methenyltetrahydrofolate + NADPH. It catalyses the reaction (6R)-5,10-methenyltetrahydrofolate + H2O = (6R)-10-formyltetrahydrofolate + H(+). It functions in the pathway one-carbon metabolism; tetrahydrofolate interconversion. Catalyzes the oxidation of 5,10-methylenetetrahydrofolate to 5,10-methenyltetrahydrofolate and then the hydrolysis of 5,10-methenyltetrahydrofolate to 10-formyltetrahydrofolate. The sequence is that of Bifunctional protein FolD from Anoxybacillus flavithermus (strain DSM 21510 / WK1).